Reading from the N-terminus, the 301-residue chain is Pyridoxal 5'-phosphate synthase subunit PdxS (301 aa).

Residue Asp31 participates in D-ribose 5-phosphate binding. Lys88 serves as the catalytic Schiff-base intermediate with D-ribose 5-phosphate. Gly160 provides a ligand contact to D-ribose 5-phosphate. Lys172 is a D-glyceraldehyde 3-phosphate binding site. D-ribose 5-phosphate contacts are provided by residues Gly221 and 242–243; that span reads GS.

Belongs to the PdxS/SNZ family. In terms of assembly, in the presence of PdxT, forms a dodecamer of heterodimers.

It carries out the reaction aldehydo-D-ribose 5-phosphate + D-glyceraldehyde 3-phosphate + L-glutamine = pyridoxal 5'-phosphate + L-glutamate + phosphate + 3 H2O + H(+). It functions in the pathway cofactor biosynthesis; pyridoxal 5'-phosphate biosynthesis. In terms of biological role, catalyzes the formation of pyridoxal 5'-phosphate from ribose 5-phosphate (RBP), glyceraldehyde 3-phosphate (G3P) and ammonia. The ammonia is provided by the PdxT subunit. Can also use ribulose 5-phosphate and dihydroxyacetone phosphate as substrates, resulting from enzyme-catalyzed isomerization of RBP and G3P, respectively. This Methanosarcina mazei (strain ATCC BAA-159 / DSM 3647 / Goe1 / Go1 / JCM 11833 / OCM 88) (Methanosarcina frisia) protein is Pyridoxal 5'-phosphate synthase subunit PdxS.